The primary structure comprises 465 residues: ATP synthase subunit beta (465 aa).

151–158 serves as a coordination point for ATP; that stretch reads GGAGVGKT.

It belongs to the ATPase alpha/beta chains family. In terms of assembly, F-type ATPases have 2 components, CF(1) - the catalytic core - and CF(0) - the membrane proton channel. CF(1) has five subunits: alpha(3), beta(3), gamma(1), delta(1), epsilon(1). CF(0) has four main subunits: a(1), b(1), b'(1) and c(9-12).

It is found in the cell inner membrane. It catalyses the reaction ATP + H2O + 4 H(+)(in) = ADP + phosphate + 5 H(+)(out). Produces ATP from ADP in the presence of a proton gradient across the membrane. The catalytic sites are hosted primarily by the beta subunits. The protein is ATP synthase subunit beta of Chloroherpeton thalassium (strain ATCC 35110 / GB-78).